The following is a 425-amino-acid chain: Putative TRAP transporter large permease protein HI_1029 (425 aa).

Transmembrane regions (helical) follow at residues 3 to 23, 24 to 44, 54 to 74, 93 to 113, 139 to 159, 169 to 189, 217 to 237, 241 to 261, 275 to 295, 312 to 332, 334 to 354, 355 to 375, and 399 to 419; these read VIIF…VAFA, LLIC…QILA, FSLM…EGGL, LGFV…SAVA, LIGT…FIVF, KLFL…AILW, VWAL…IFTP, GVVA…ELPL, TAVV…ITVA, PTIL…VMDL, PTVL…GIDP, VYFG…PPVG, and YLGM…LILM.

Belongs to the TRAP transporter large permease family.

It localises to the cell inner membrane. The chain is Putative TRAP transporter large permease protein HI_1029 from Haemophilus influenzae (strain ATCC 51907 / DSM 11121 / KW20 / Rd).